Consider the following 3230-residue polypeptide: Helicase SRCAP (3230 aa).

The tract at residues 1–71 (MQSSPSPAHP…GPPDGATVPL (71 aa)) is disordered. Over residues 26–41 (GSNPVSPASSSSPASS) the composition is skewed to low complexity. An HSA domain is found at 124–196 (LPKVPEPPRP…EQAKLRRIAS (73 aa)). 2 disordered regions span residues 253–547 (QPLT…EEDD) and 559–581 (EEQSEADAGSGPPTPGPTTLGPK). The segment covering 257–273 (SSKAGSSPCLGSSSAAS) has biased composition (low complexity). A compositionally biased stretch (acidic residues) spans 283-313 (DDEDGDFQPQEDEEEDDEETIEVEEQQEGND). Positions 315–329 (EAQRREIELLRREGE) are enriched in basic and acidic residues. Positions 337–356 (RSLPPQLLEGPSSPSQTPSS) are enriched in low complexity. A compositionally biased stretch (acidic residues) spans 397-425 (DEDDEEFTANEEEAEDEEDTIAAEEQLEG). A compositionally biased stretch (basic and acidic residues) spans 426–441 (EVDHAMELSELAREGE). Acidic residues-rich tracts occupy residues 462 to 490 (SEDEDEDEVDANSSDCEPEGPVEAEEPPQ), 503 to 517 (RSEDEEDEHSEEEET), and 524 to 533 (EESESEESED). Residues 630–795 (VTMYEKKLNG…WSLMHFLMPH (166 aa)) enclose the Helicase ATP-binding domain. Residue 643-650 (DEMGLGKT) participates in ATP binding. Disordered regions lie at residues 1017-1045 (APLGPVPVRPPPGPELSAQPTPGPVPQVL), 1058-1125 (PPLI…PGSS), and 1138-1166 (TFPPAAATTTSTTTATATTTAVPAPTPAP). Pro residues-rich tracts occupy residues 1018–1030 (PLGPVPVRPPPGP) and 1058–1076 (PPLIPASRPPGPVLLPPLQ). Positions 1093–1107 (LSGTSRPPTPTLSLK) are enriched in low complexity. Residues 1108-1123 (PTPPAPVRLSPAPPPG) are compositionally biased toward pro residues. Residues 1138–1160 (TFPPAAATTTSTTTATATTTAVP) are compositionally biased toward low complexity. Ser1172 carries the post-translational modification Phosphoserine. Disordered stretches follow at residues 1320 to 1366 (GLTP…APMP), 1406 to 1425 (SLPGPASSPMPIPNSSPLAS), 1629 to 1760 (VPVM…ASPV), and 1839 to 1893 (SRLP…EEKR). The span at 1323–1336 (PVPPLAPAPRPPSS) shows a compositional bias: pro residues. Residues 1337–1360 (GLPAVLNPRPTLTPGRLPTPTLGT) are compositionally biased toward low complexity. A compositionally biased stretch (low complexity) spans 1675 to 1691 (PASTQTLALAPALAPTL). A compositionally biased stretch (polar residues) spans 1692 to 1733 (GGSSPSQTLSLGTGNPQGPFPTQTLSLTPASSLVPTPAQTLS). Positions 1750 to 1760 (PAPPLAPASPV) are enriched in pro residues. One can recognise a Helicase C-terminal domain in the interval 2044–2197 (KLQTLAVLLR…DMAIEGGNFT (154 aa)). Disordered stretches follow at residues 2214–2233 (LEEPSSSSVPSAPEEEEETV), 2271–2298 (FNENDGFPAGEGEEAGRPGAEDEEMSRA), 2327–2453 (VSRE…APAA), 2564–2583 (LELASVASSETSSLSLVPPK), 2598–3081 (KNLS…GRKS), and 3095–3230 (DLAD…KAKT). Positions 2215 to 2225 (EEPSSSSVPSA) are enriched in low complexity. 3 stretches are compositionally biased toward basic and acidic residues: residues 2284 to 2298 (EAGRPGAEDEEMSRA), 2327 to 2358 (VSREELKQAEEQVEAARKDLDQAKEEVFRLPQ), and 2386 to 2403 (KAPERPGTRVSERLRGAR). The span at 2438-2448 (RPAPRPRPTPA) shows a compositional bias: pro residues. Composition is skewed to low complexity over residues 2564-2579 (LELASVASSETSSLSL) and 2600-2611 (LSLTPSAPSLTL). A compositionally biased stretch (basic and acidic residues) spans 2669–2679 (EADRTSEELTE). Positions 2694–2712 (VTAEVAAPSTSSSATSSPE) are enriched in low complexity. The segment covering 2782–2794 (SETSASPGSPSVR) has biased composition (polar residues). Residues 2807–2817 (GPCEAAPSSSL) are compositionally biased toward low complexity. Positions 2856–2868 (VKRRRGRPPKKNR) are enriched in basic residues. Residues 2857 to 2869 (KRRRGRPPKKNRS) constitute a DNA-binding region (a.T hook 1). Residues 2913 to 2926 (IPGPQPLGPQPVHR) are compositionally biased toward pro residues. The a.T hook 2 DNA-binding region spans 2936 to 2948 (KRRRGRPPKARDL). Residues 2953–2965 (TISSAGDGNSESR) are compositionally biased toward polar residues. Residues 2967-2982 (QPPPHPSPLTPLPPLL) are compositionally biased toward pro residues. Residues 2983-3002 (VCPTATVANTVTTVTISTSP) are compositionally biased toward low complexity. The a.T hook 3 DNA-binding region spans 3004–3016 (KRKRGRPPKNPPS). Over residues 3011–3020 (PKNPPSPRPS) the composition is skewed to pro residues. Residues 3044-3053 (PQGQGESEGS) show a composition bias toward low complexity. Positions 3168-3184 (SVEESEAEASGEEEEGD) are enriched in acidic residues.

The protein belongs to the SNF2/RAD54 helicase family. SWR1 subfamily. Interacts with CREBBP and EP300. May be part of a complex containing SRCAP, CREBBP, CARM1 and GRIP1. Component of the chromatin-remodeling SRCAP complex composed of at least SRCAP, DMAP1, RUVBL1, RUVBL2, ACTL6A, YEATS4, VPS72, ACTR6 and ZNHIT1. Component of a NuA4-related complex which contains EP400, TRRAP/PAF400, SRCAP, BRD8/SMAP, EPC1, DMAP1/DNMAP1, RUVBL1/TIP49, RUVBL2, actin, ACTL6A/BAF53A, VPS72 and YEATS4/GAS41. As to quaternary structure, (Microbial infection) Interacts with hepatitis C virus (HCV) NS5A. In terms of assembly, (Microbial infection) Interacts with human adenovirus 2 DBP.

The protein localises to the nucleus. Functionally, catalytic component of the SRCAP complex which mediates the ATP-dependent exchange of histone H2AZ/H2B dimers for nucleosomal H2A/H2B, leading to transcriptional regulation of selected genes by chromatin remodeling. Acts as a coactivator for CREB-mediated transcription, steroid receptor-mediated transcription, and Notch-mediated transcription. The chain is Helicase SRCAP (SRCAP) from Homo sapiens (Human).